The chain runs to 243 residues: Exosome complex component Rrp41 (243 aa).

The protein belongs to the RNase PH family. Rrp41 subfamily. In terms of assembly, component of the archaeal exosome complex. Forms a hexameric ring-like arrangement composed of 3 Rrp41-Rrp42 heterodimers. The hexameric ring associates with a trimer of Rrp4 and/or Csl4 subunits.

It is found in the cytoplasm. Functionally, catalytic component of the exosome, which is a complex involved in RNA degradation. Has 3'-&gt;5' exoribonuclease activity. Can also synthesize heteromeric RNA-tails. This chain is Exosome complex component Rrp41, found in Sulfurisphaera tokodaii (strain DSM 16993 / JCM 10545 / NBRC 100140 / 7) (Sulfolobus tokodaii).